The following is a 298-amino-acid chain: MGDHAWSFLKDFLAGGVAAAVSKTAVAPIERVKLLLQVQHASKQISAEKQYKGIIDCVVRIPKEQGFLSFWRGNLANVIRYFPTQALNFAFKDKYKQLFLGGVDRHKQFWRYFAGNLASGGAAGATSLCFVYPLDFARTRLAADVGKGAAQREFHGLGDCIIKIFKSDGLRGLYQGFNVSVQGIIIYRAAYFGVYDTAKGMLPDPKNVHIFVSWMIAQSVTAVAGLVSYPFDTVRRRMMMQSGRKGADIMYTGTVDCWRKIAKDEGAKAFFKGAWSNVLRGMGGAFVLVLYDEIKKYV.

The Mitochondrial intermembrane portion of the chain corresponds to 1–7; sequence MGDHAWS. Gly2 carries the N-acetylglycine modification. The Solcar 1 repeat unit spans residues 6–98; it reads WSFLKDFLAG…FAFKDKYKQL (93 aa). Phosphoserine is present on Ser7. A helical transmembrane segment spans residues 8-37; it reads FLKDFLAGGVAAAVSKTAVAPIERVKLLLQ. At 38-74 the chain is on the mitochondrial matrix side; sequence VQHASKQISAEKQYKGIIDCVVRIPKEQGFLSFWRGN. At Lys52 the chain carries N6,N6,N6-trimethyllysine. Residues 75–99 form a helical membrane-spanning segment; the sequence is LANVIRYFPTQALNFAFKDKYKQLF. The ADP site is built by Arg80 and Lys92. Topologically, residues 100–109 are mitochondrial intermembrane; the sequence is LGGVDRHKQF. The chain crosses the membrane as a helical span at residues 110–130; sequence WRYFAGNLASGGAAGATSLCF. Solcar repeat units lie at residues 111 to 201 and 212 to 297; these read RYFA…AKGM and VSWM…IKKY. Residues 131–178 lie on the Mitochondrial matrix side of the membrane; the sequence is VYPLDFARTRLAADVGKGAAQREFHGLGDCIIKIFKSDGLRGLYQGFN. At Lys147 the chain carries N6-succinyllysine. At Cys160 the chain carries S-nitrosocysteine. A helical membrane pass occupies residues 179–199; that stretch reads VSVQGIIIYRAAYFGVYDTAK. Residues 200 to 210 are Mitochondrial intermembrane-facing; sequence GMLPDPKNVHI. Residues 211–231 form a helical membrane-spanning segment; sequence FVSWMIAQSVTAVAGLVSYPF. At 232 to 273 the chain is on the mitochondrial matrix side; it reads DTVRRRMMMQSGRKGADIMYTGTVDCWRKIAKDEGAKAFFKG. Arg235 is a binding site for ADP. The segment at 235–240 is important for transport activity; that stretch reads RRRMMM. The Nucleotide carrier signature motif motif lies at 235–240; the sequence is RRRMMM. N6-succinyllysine is present on residues Lys245 and Lys272. Residues 274–291 traverse the membrane as a helical segment; sequence AWSNVLRGMGGAFVLVLY. At 292–298 the chain is on the mitochondrial intermembrane side; sequence DEIKKYV.

It belongs to the mitochondrial carrier (TC 2.A.29) family. In terms of assembly, monomer. Found in a complex with ARL2, ARL2BP and SLC25A4/ANT1. Interacts with ARL2BP. Interacts with ARHGAP11B, thereby inhibiting the mitochondrial permeability transition pore (mPTP). Interacts with TIMM44; leading to inhibit the presequence translocase TIMM23, thereby promoting stabilization of PINK1. (Microbial infection) Interacts with HIV-1 Vpr. In terms of processing, under cell death induction, transglutaminated by TGM2. Transglutamination leads to formation of covalent cross-links between a glutamine and the epsilon-amino group of a lysine residue, forming polymers. As to expression, expressed in erythrocytes (at protein level).

The protein localises to the mitochondrion inner membrane. It is found in the membrane. The enzyme catalyses ADP(in) + ATP(out) = ADP(out) + ATP(in). It catalyses the reaction H(+)(in) = H(+)(out). The matrix-open state (m-state) is inhibited by the membrane-permeable bongkrekic acid (BKA). The cytoplasmic-open state (c-state) is inhibited by the membrane-impermeable toxic inhibitor carboxyatractyloside (CATR). Proton transporter activity is inhibited by ADP:ATP antiporter activity. Its function is as follows. ADP:ATP antiporter that mediates import of ADP into the mitochondrial matrix for ATP synthesis, and export of ATP out to fuel the cell. Cycles between the cytoplasmic-open state (c-state) and the matrix-open state (m-state): operates by the alternating access mechanism with a single substrate-binding site intermittently exposed to either the cytosolic (c-state) or matrix (m-state) side of the inner mitochondrial membrane. In addition to its ADP:ATP antiporter activity, also involved in mitochondrial uncoupling and mitochondrial permeability transition pore (mPTP) activity. Plays a role in mitochondrial uncoupling by acting as a proton transporter: proton transport uncouples the proton flows via the electron transport chain and ATP synthase to reduce the efficiency of ATP production and cause mitochondrial thermogenesis. Proton transporter activity is inhibited by ADP:ATP antiporter activity, suggesting that SLC25A4/ANT1 acts as a master regulator of mitochondrial energy output by maintaining a delicate balance between ATP production (ADP:ATP antiporter activity) and thermogenesis (proton transporter activity). Proton transporter activity requires free fatty acids as cofactor, but does not transport it. Also plays a key role in mPTP opening, a non-specific pore that enables free passage of the mitochondrial membranes to solutes of up to 1.5 kDa, and which contributes to cell death. It is however unclear if SLC25A4/ANT1 constitutes a pore-forming component of mPTP or regulates it. Acts as a regulator of mitophagy independently of ADP:ATP antiporter activity: promotes mitophagy via interaction with TIMM44, leading to inhibit the presequence translocase TIMM23, thereby promoting stabilization of PINK1. The chain is ADP/ATP translocase 1 from Homo sapiens (Human).